Reading from the N-terminus, the 295-residue chain is Glycine--tRNA ligase alpha subunit (295 aa).

Belongs to the class-II aminoacyl-tRNA synthetase family. In terms of assembly, tetramer of two alpha and two beta subunits.

It is found in the cytoplasm. It carries out the reaction tRNA(Gly) + glycine + ATP = glycyl-tRNA(Gly) + AMP + diphosphate. The sequence is that of Glycine--tRNA ligase alpha subunit from Bacillus licheniformis (strain ATCC 14580 / DSM 13 / JCM 2505 / CCUG 7422 / NBRC 12200 / NCIMB 9375 / NCTC 10341 / NRRL NRS-1264 / Gibson 46).